Reading from the N-terminus, the 347-residue chain is Ion-translocating oxidoreductase complex subunit D (347 aa).

A run of 4 helical transmembrane segments spans residues 15 to 35 (IMFL…YFFG), 36 to 56 (IGTL…EIII), 84 to 104 (IPPL…IVVA), and 114 to 134 (NIFN…PVYM). The residue at position 182 (Thr-182) is an FMN phosphoryl threonine. The next 5 membrane-spanning stretches (helical) occupy residues 217–237 (CINI…IICW), 239–259 (IPIS…FYSK), 261–281 (LFMS…AFFI), 289–309 (ACNN…VWII), and 315–335 (YPDA…LVDY).

This sequence belongs to the NqrB/RnfD family. In terms of assembly, the complex is composed of six subunits: RnfA, RnfB, RnfC, RnfD, RnfE and RnfG. It depends on FMN as a cofactor.

The protein resides in the cell inner membrane. Part of a membrane-bound complex that couples electron transfer with translocation of ions across the membrane. The polypeptide is Ion-translocating oxidoreductase complex subunit D (Buchnera aphidicola subsp. Acyrthosiphon pisum (strain 5A)).